The sequence spans 399 residues: S-adenosylmethionine synthase (399 aa).

Histidine 16 lines the ATP pocket. Aspartate 18 serves as a coordination point for Mg(2+). Glutamate 44 contributes to the K(+) binding site. Residues glutamate 57 and glutamine 100 each contribute to the L-methionine site. Residues 100–110 (QSPDIAQGVDD) form a flexible loop region. ATP-binding positions include 174–176 (DAK), 241–242 (RF), aspartate 250, 256–257 (RK), alanine 273, and lysine 277. Aspartate 250 provides a ligand contact to L-methionine. Lysine 281 serves as a coordination point for L-methionine.

It belongs to the AdoMet synthase family. Homotetramer; dimer of dimers. It depends on Mg(2+) as a cofactor. K(+) serves as cofactor.

The protein localises to the cytoplasm. It catalyses the reaction L-methionine + ATP + H2O = S-adenosyl-L-methionine + phosphate + diphosphate. It functions in the pathway amino-acid biosynthesis; S-adenosyl-L-methionine biosynthesis; S-adenosyl-L-methionine from L-methionine: step 1/1. Catalyzes the formation of S-adenosylmethionine (AdoMet) from methionine and ATP. The overall synthetic reaction is composed of two sequential steps, AdoMet formation and the subsequent tripolyphosphate hydrolysis which occurs prior to release of AdoMet from the enzyme. The chain is S-adenosylmethionine synthase from Latilactobacillus sakei subsp. sakei (strain 23K) (Lactobacillus sakei subsp. sakei).